Reading from the N-terminus, the 149-residue chain is Transcriptional repressor NrdR (149 aa).

The segment at 3 to 34 (CPFCAAVDTKVIDSRLVGDGSQVRRRRQCLEC) is a zinc-finger region. The region spanning 49–139 (PRVIKSDDIR…VYRSFEDIRE (91 aa)) is the ATP-cone domain.

The protein belongs to the NrdR family. It depends on Zn(2+) as a cofactor.

Negatively regulates transcription of bacterial ribonucleotide reductase nrd genes and operons by binding to NrdR-boxes. The protein is Transcriptional repressor NrdR of Photorhabdus laumondii subsp. laumondii (strain DSM 15139 / CIP 105565 / TT01) (Photorhabdus luminescens subsp. laumondii).